Here is a 208-residue protein sequence, read N- to C-terminus: ATP phosphoribosyltransferase (208 aa).

It belongs to the ATP phosphoribosyltransferase family. Short subfamily. As to quaternary structure, heteromultimer composed of HisG and HisZ subunits.

The protein localises to the cytoplasm. It carries out the reaction 1-(5-phospho-beta-D-ribosyl)-ATP + diphosphate = 5-phospho-alpha-D-ribose 1-diphosphate + ATP. Its pathway is amino-acid biosynthesis; L-histidine biosynthesis; L-histidine from 5-phospho-alpha-D-ribose 1-diphosphate: step 1/9. Functionally, catalyzes the condensation of ATP and 5-phosphoribose 1-diphosphate to form N'-(5'-phosphoribosyl)-ATP (PR-ATP). Has a crucial role in the pathway because the rate of histidine biosynthesis seems to be controlled primarily by regulation of HisG enzymatic activity. The chain is ATP phosphoribosyltransferase from Lactococcus lactis subsp. cremoris (strain MG1363).